Consider the following 238-residue polypeptide: Ribonuclease PH (238 aa).

Residues Arg-86 and 124–126 contribute to the phosphate site; that span reads GTR.

The protein belongs to the RNase PH family. As to quaternary structure, homohexameric ring arranged as a trimer of dimers.

The catalysed reaction is tRNA(n+1) + phosphate = tRNA(n) + a ribonucleoside 5'-diphosphate. Functionally, phosphorolytic 3'-5' exoribonuclease that plays an important role in tRNA 3'-end maturation. Removes nucleotide residues following the 3'-CCA terminus of tRNAs; can also add nucleotides to the ends of RNA molecules by using nucleoside diphosphates as substrates, but this may not be physiologically important. Probably plays a role in initiation of 16S rRNA degradation (leading to ribosome degradation) during starvation. This Erwinia tasmaniensis (strain DSM 17950 / CFBP 7177 / CIP 109463 / NCPPB 4357 / Et1/99) protein is Ribonuclease PH.